Reading from the N-terminus, the 399-residue chain is 26S proteasome regulatory subunit S10B homolog B (399 aa).

180–187 (GPPGTGKT) contacts ATP. A Glycyl lysine isopeptide (Lys-Gly) (interchain with G-Cter in ubiquitin) cross-link involves residue K203.

The protein belongs to the AAA ATPase family. Component of the 19S regulatory particle (RP/PA700) base subcomplex of the 26S proteasome. The 26S proteasome is composed of a core protease (CP), known as the 20S proteasome, capped at one or both ends by the 19S regulatory particle (RP/PA700). The RP/PA700 complex is composed of at least 17 different subunits in two subcomplexes, the base and the lid, which form the portions proximal and distal to the 20S proteolytic core, respectively.

It localises to the cytoplasm. The protein localises to the nucleus. Functionally, the 26S proteasome is involved in the ATP-dependent degradation of ubiquitinated proteins. The regulatory (or ATPase) complex confers ATP dependency and substrate specificity to the 26S complex. The sequence is that of 26S proteasome regulatory subunit S10B homolog B (RPT4B) from Arabidopsis thaliana (Mouse-ear cress).